The following is a 142-amino-acid chain: Putative mating-type transcription factor (142 aa).

The protein localises to the nucleus. The sequence is that of Putative mating-type transcription factor from Eremothecium gossypii (strain ATCC 10895 / CBS 109.51 / FGSC 9923 / NRRL Y-1056) (Yeast).